The chain runs to 261 residues: 5-hmdU DNA kinase (261 aa).

This sequence belongs to the thymidylate kinase family. 5-hmdU DNA kinase subfamily.

The enzyme catalyses 5-hydroxymethyl-dUMP in DNA + ATP = 5-phosphomethyl-dUMP in DNA + ADP + H(+). Functionally, phosphorylates 5-hydroxymethyluracil (5hmdU) into 5-phosphomethyl-2'-deoxyuridine (5- PmdU) on DNA as a step in the pathway leading to thymidine hypermodifications in the viral genome. As a final result of the pathway of hypermodification, 5-Nalpha-putrescinylthymidine (Nalpha-PutT) substitutes for about 50% of thymidines in the viral DNA. These modifications probably prevent degradation of viral genome by the host restriction-modification antiviral defense system. The protein is 5-hmdU DNA kinase of Delftia phage PhiW-14 (Deftia acidovorans bacteriophage phiW-14).